The sequence spans 527 residues: Glutamyl-tRNA reductase 1, chloroplastic (527 aa).

The transit peptide at 1-43 (MAGATSATAAAGAFAAAKARGPAAACPWLVAAGGRRRSGVVRC) directs the protein to the chloroplast. Residues 124 to 127 (TCNR), Ser-184, 189 to 191 (EGQ), and Gln-195 contribute to the substrate site. Cys-125 acts as the Nucleophile in catalysis. Residue 266–271 (GAGKMG) coordinates NADP(+).

Belongs to the glutamyl-tRNA reductase family. Homodimer.

Its subcellular location is the plastid. It localises to the chloroplast. The enzyme catalyses (S)-4-amino-5-oxopentanoate + tRNA(Glu) + NADP(+) = L-glutamyl-tRNA(Glu) + NADPH + H(+). It participates in porphyrin-containing compound metabolism; protoporphyrin-IX biosynthesis; 5-aminolevulinate from L-glutamyl-tRNA(Glu): step 1/2. In terms of biological role, catalyzes the NADPH-dependent reduction of glutamyl-tRNA(Glu) to glutamate 1-semialdehyde (GSA). The polypeptide is Glutamyl-tRNA reductase 1, chloroplastic (HEMA1) (Hordeum vulgare (Barley)).